The primary structure comprises 2767 residues: Serine/threonine-protein kinase ATM (2767 aa).

The FAT domain occupies 1713 to 2317 (NVVMASNHCQ…FYQLYPLVFA (605 aa)). Residues 2419–2734 (WTNETTQCGG…KLDGREAGTM (316 aa)) enclose the PI3K/PI4K catalytic domain. The tract at residues 2425 to 2431 (QCGGLNA) is G-loop. The tract at residues 2601–2609 (GLGDRHTQN) is catalytic loop. The segment at 2621 to 2645 (HIDFGIAFEQGKIQTTPETVPFRLT) is activation loop. Positions 2735–2767 (GDSNVEAQVERLINEATLPSNLCMLFPGWDPHL) constitute an FATC domain.

This sequence belongs to the PI3/PI4-kinase family. ATM subfamily.

The protein resides in the nucleus. Its subcellular location is the chromosome. It localises to the telomere. It catalyses the reaction L-seryl-[protein] + ATP = O-phospho-L-seryl-[protein] + ADP + H(+). The catalysed reaction is L-threonyl-[protein] + ATP = O-phospho-L-threonyl-[protein] + ADP + H(+). Functionally, serine/threonine-protein kinase which recognizes the substrate consensus sequence [ST]-Q. Required to suppress spontaneous apoptosis of proliferating cells during development, and for their proper differentiation. Required for female fertility. Protects telomeres from fusion, maybe by recruiting or maintaining chromatin-modifying complexes such as Su(var)205/HP1. May activate checkpoint signaling in response to DNA double-stranded breaks induced by low-dose ionizing radiation. May phosphorylate histone H2AV. The sequence is that of Serine/threonine-protein kinase ATM (tefu) from Drosophila melanogaster (Fruit fly).